Consider the following 320-residue polypeptide: Cytochrome f (320 aa).

The N-terminal stretch at 1-35 (MEKRNTYDWVTRWVIASFSILTISYMITWTSISNA) is a signal peptide. Heme is bound by residues Tyr36, Cys56, Cys59, and His60. The chain crosses the membrane as a helical span at residues 286–306 (IQGLLVFLASVVLAQIFLVLK).

Belongs to the cytochrome f family. As to quaternary structure, the 4 large subunits of the cytochrome b6-f complex are cytochrome b6, subunit IV (17 kDa polypeptide, petD), cytochrome f and the Rieske protein, while the 4 small subunits are PetG, PetL, PetM and PetN. The complex functions as a dimer. Heme is required as a cofactor.

It localises to the plastid. It is found in the chloroplast thylakoid membrane. Functionally, component of the cytochrome b6-f complex, which mediates electron transfer between photosystem II (PSII) and photosystem I (PSI), cyclic electron flow around PSI, and state transitions. The chain is Cytochrome f from Welwitschia mirabilis (Tree tumbo).